The sequence spans 153 residues: Histone H2B.3 (153 aa).

2 stretches are compositionally biased toward basic and acidic residues: residues 1–28 (MAPK…EKAP) and 36–53 (EKRL…EGRK). The interval 1-61 (MAPKAEKKPA…RKAGRKKAKK (61 aa)) is disordered. An N6-acetyllysine mark is found at K7 and K37. A Glycyl lysine isopeptide (Lys-Gly) (interchain with G-Cter in ubiquitin) cross-link involves residue K149.

It belongs to the histone H2B family. In terms of assembly, the nucleosome is a histone octamer containing two molecules each of H2A, H2B, H3 and H4 assembled in one H3-H4 heterotetramer and two H2A-H2B heterodimers. The octamer wraps approximately 147 bp of DNA. Can be acetylated to form H2BK6ac and H2BK33ac. In terms of processing, monoubiquitinated by BRE1 to form H2BK143ub1 and deubiquitinated by UBP26. Required for heterochromatic histone H3 di- and trimethylation at H3K4me. May give a specific tag for epigenetic transcriptional activation.

It localises to the nucleus. The protein localises to the chromosome. Functionally, core component of nucleosome. Nucleosomes wrap and compact DNA into chromatin, limiting DNA accessibility to the cellular machineries which require DNA as a template. Histones thereby play a central role in transcription regulation, DNA repair, DNA replication and chromosomal stability. DNA accessibility is regulated via a complex set of post-translational modifications of histones, also called histone code, and nucleosome remodeling. The chain is Histone H2B.3 (H2B.3) from Oryza sativa subsp. japonica (Rice).